The following is a 282-amino-acid chain: Pantothenate synthetase (282 aa).

Residue 30–37 (MGYLHEGH) participates in ATP binding. His37 serves as the catalytic Proton donor. Residue Gln61 coordinates (R)-pantoate. Beta-alanine is bound at residue Gln61. 147 to 150 (GMKD) provides a ligand contact to ATP. Residue Gln153 participates in (R)-pantoate binding. Residues Val176 and 184-187 (KSSR) contribute to the ATP site.

Belongs to the pantothenate synthetase family. As to quaternary structure, homodimer.

It is found in the cytoplasm. The enzyme catalyses (R)-pantoate + beta-alanine + ATP = (R)-pantothenate + AMP + diphosphate + H(+). The protein operates within cofactor biosynthesis; (R)-pantothenate biosynthesis; (R)-pantothenate from (R)-pantoate and beta-alanine: step 1/1. Catalyzes the condensation of pantoate with beta-alanine in an ATP-dependent reaction via a pantoyl-adenylate intermediate. The sequence is that of Pantothenate synthetase from Bacillus cereus (strain B4264).